Here is a 460-residue protein sequence, read N- to C-terminus: Bifunctional protein GlmU (460 aa).

The tract at residues 1–235 is pyrophosphorylase; it reads MALSAAIVLA…PLTVEGVNDR (235 aa). UDP-N-acetyl-alpha-D-glucosamine-binding positions include 9–12, K23, Q76, and 81–82; these read LAAG and GT. D109 lines the Mg(2+) pocket. Residues G146, E161, N176, and N233 each contribute to the UDP-N-acetyl-alpha-D-glucosamine site. A Mg(2+)-binding site is contributed by N233. The segment at 236-256 is linker; the sequence is VQLAALSKTYNRRVCERWMRD. The tract at residues 257 to 460 is N-acetyltransferase; the sequence is GVTILDPETT…VEGWKPAWER (204 aa). The UDP-N-acetyl-alpha-D-glucosamine site is built by R338 and K356. The active-site Proton acceptor is H368. The UDP-N-acetyl-alpha-D-glucosamine site is built by Y371 and N382. Acetyl-CoA contacts are provided by residues 391 to 392 and A428; that span reads NY.

This sequence in the N-terminal section; belongs to the N-acetylglucosamine-1-phosphate uridyltransferase family. In the C-terminal section; belongs to the transferase hexapeptide repeat family. As to quaternary structure, homotrimer. It depends on Mg(2+) as a cofactor.

Its subcellular location is the cytoplasm. It catalyses the reaction alpha-D-glucosamine 1-phosphate + acetyl-CoA = N-acetyl-alpha-D-glucosamine 1-phosphate + CoA + H(+). It carries out the reaction N-acetyl-alpha-D-glucosamine 1-phosphate + UTP + H(+) = UDP-N-acetyl-alpha-D-glucosamine + diphosphate. Its pathway is nucleotide-sugar biosynthesis; UDP-N-acetyl-alpha-D-glucosamine biosynthesis; N-acetyl-alpha-D-glucosamine 1-phosphate from alpha-D-glucosamine 6-phosphate (route II): step 2/2. The protein operates within nucleotide-sugar biosynthesis; UDP-N-acetyl-alpha-D-glucosamine biosynthesis; UDP-N-acetyl-alpha-D-glucosamine from N-acetyl-alpha-D-glucosamine 1-phosphate: step 1/1. It participates in bacterial outer membrane biogenesis; LPS lipid A biosynthesis. Its function is as follows. Catalyzes the last two sequential reactions in the de novo biosynthetic pathway for UDP-N-acetylglucosamine (UDP-GlcNAc). The C-terminal domain catalyzes the transfer of acetyl group from acetyl coenzyme A to glucosamine-1-phosphate (GlcN-1-P) to produce N-acetylglucosamine-1-phosphate (GlcNAc-1-P), which is converted into UDP-GlcNAc by the transfer of uridine 5-monophosphate (from uridine 5-triphosphate), a reaction catalyzed by the N-terminal domain. The protein is Bifunctional protein GlmU of Bifidobacterium longum (strain DJO10A).